The primary structure comprises 1388 residues: Rho-associated protein kinase 2 (1388 aa).

A disordered region spans residues 1-26 (MSRPPPTGKMPGAPEAAPGDGAGAGR). The Protein kinase domain occupies 92–354 (YDVVKVIGRG…VEEIKQHPFF (263 aa)). ATP-binding positions include 98–106 (IGRGAFGEV) and Lys-121. Asp-214 serves as the catalytic Proton acceptor. The AGC-kinase C-terminal domain maps to 357 to 425 (DQWNWDNIRE…FRENLLLSDS (69 aa)). Positions 363-784 (NIRETAAPVV…LNELLKQKDV (422 aa)) are interaction with PPP1R12A. An interaction with NPM1 region spans residues 373-420 (PELSSDIDSSNFDDIEDDKGDVETFPIPKAFVGNQLPFIGFTYFRENL). Thr-414 bears the Phosphothreonine; by ROCK2 mark. Positions 439–1131 (SEESQEIQKK…QLQALHIGMD (693 aa)) form a coiled coil. One can recognise an REM-1 domain in the interval 497-573 (TLRQLEREKA…LDEANALLRT (77 aa)). Positions 512-530 (NAEYQRKADHEADKKRNLE) are enriched in basic and acidic residues. Residues 512 to 532 (NAEYQRKADHEADKKRNLEND) are disordered. Tyr-722 bears the Phosphotyrosine; by SRC mark. The region spanning 979–1047 (TSDVANLANE…LAEIMNRKEP (69 aa)) is the RhoBD domain. Residues 979–1047 (TSDVANLANE…LAEIMNRKEP (69 aa)) are RHOA binding. Ser-1137 is modified (phosphoserine). In terms of domain architecture, PH spans 1150-1349 (ESRLEGWLSL…WVSRLVKKIP (200 aa)). The residue at position 1212 (Thr-1212) is a Phosphothreonine. A Phorbol-ester/DAG-type zinc finger spans residues 1260 to 1315 (GHEFIPTLYHFPTNCEACMKPLWHMFKPPPALECRRCHIKCHKDHMDKKEEIIAPC). The segment at 1345 to 1388 (VKKIPKKPPAPDPFARSSPRTSMKIQQNQSIRRPSRQLAPNKPS) is disordered. Ser-1362 and Ser-1374 each carry phosphoserine. Over residues 1362–1376 (SPRTSMKIQQNQSIR) the composition is skewed to polar residues.

Belongs to the protein kinase superfamily. AGC Ser/Thr protein kinase family. As to quaternary structure, homodimer. Interacts with IRS1. Interacts with RAF1. Interacts with RHOA (activated by GTP), RHOB and RHOC. Interacts with PPP1R12A. Interacts with EP300. Interacts with CHORDC1. Interacts with BRCA2. Interacts with NPM1; this interaction enhances ROCK2 activity. Interacts with SORL1. Interacts with PJVK. Requires Mg(2+) as cofactor. Autophosphorylated. Phosphorylation at Tyr-722 reduces its binding to RHOA and is crucial for focal adhesion dynamics. Dephosphorylation by PTPN11 stimulates its RHOA binding activity. Post-translationally, cleaved by granzyme B during apoptosis. This leads to constitutive activation of the kinase and membrane blebbing. In terms of tissue distribution, highly expressed in brain, heart, lung, liver, stomach, spleen, kidney, testis, muscle, embryo and placenta. Isoform 2 is expressed predominantly in the skeletal muscle.

It localises to the cytoplasm. It is found in the cell membrane. The protein resides in the nucleus. Its subcellular location is the cytoskeleton. The protein localises to the microtubule organizing center. It localises to the centrosome. The enzyme catalyses L-seryl-[protein] + ATP = O-phospho-L-seryl-[protein] + ADP + H(+). It catalyses the reaction L-threonyl-[protein] + ATP = O-phospho-L-threonyl-[protein] + ADP + H(+). With respect to regulation, activated by RHOA binding. Inhibited by Y-27632. In terms of biological role, protein kinase which is a key regulator of actin cytoskeleton and cell polarity. Involved in regulation of smooth muscle contraction, actin cytoskeleton organization, stress fiber and focal adhesion formation, neurite retraction, cell adhesion and motility via phosphorylation of ADD1, BRCA2, CNN1, EZR, DPYSL2, EP300, MSN, MYL9/MLC2, NPM1, RDX, PPP1R12A and VIM. Phosphorylates SORL1 and IRF4. Acts as a negative regulator of VEGF-induced angiogenic endothelial cell activation. Positively regulates the activation of p42/MAPK1-p44/MAPK3 and of p90RSK/RPS6KA1 during myogenic differentiation. Plays an important role in the timely initiation of centrosome duplication. Inhibits keratinocyte terminal differentiation. May regulate closure of the eyelids and ventral body wall through organization of actomyosin bundles. Plays a critical role in the regulation of spine and synaptic properties in the hippocampus. Plays a role in placental homeostasis during the perinatal period. Plays an important role in generating the circadian rhythm of the aortic myofilament Ca(2+) sensitivity and vascular contractility by modulating the myosin light chain phosphorylation. This Mus musculus (Mouse) protein is Rho-associated protein kinase 2 (Rock2).